A 372-amino-acid chain; its full sequence is N-methyl-L-tryptophan oxidase (372 aa).

4 to 34 (DLIIIGSGSVGAAAGYYATRAGLNVLMTDAH) provides a ligand contact to FAD. At Cys-308 the chain carries S-8alpha-FAD cysteine.

Belongs to the MSOX/MTOX family. MTOX subfamily. As to quaternary structure, monomer. Requires FAD as cofactor.

The catalysed reaction is N(alpha)-methyl-L-tryptophan + O2 + H2O = L-tryptophan + formaldehyde + H2O2. In terms of biological role, catalyzes the oxidative demethylation of N-methyl-L-tryptophan. This is N-methyl-L-tryptophan oxidase from Escherichia coli O139:H28 (strain E24377A / ETEC).